A 199-amino-acid polypeptide reads, in one-letter code: Recombination protein RecR (199 aa).

The C4-type zinc finger occupies 58–73 (CSVCSNLTDIDPCPLC). The Toprim domain maps to 81 to 176 (TVICVVQDPR…KATRIAHGIP (96 aa)).

It belongs to the RecR family.

May play a role in DNA repair. It seems to be involved in an RecBC-independent recombinational process of DNA repair. It may act with RecF and RecO. In Ruminiclostridium cellulolyticum (strain ATCC 35319 / DSM 5812 / JCM 6584 / H10) (Clostridium cellulolyticum), this protein is Recombination protein RecR.